Here is a 400-residue protein sequence, read N- to C-terminus: tRNA (guanine-N(7)-)-methyltransferase (400 aa).

S-adenosyl-L-methionine contacts are provided by Glu124, Glu149, and Asp176. Asp232 lines the substrate pocket.

It belongs to the class I-like SAM-binding methyltransferase superfamily. TrmB family.

It carries out the reaction guanosine(46) in tRNA + S-adenosyl-L-methionine = N(7)-methylguanosine(46) in tRNA + S-adenosyl-L-homocysteine. The protein operates within tRNA modification; N(7)-methylguanine-tRNA biosynthesis. In terms of biological role, catalyzes the formation of N(7)-methylguanine at position 46 (m7G46) in tRNA. In Helicobacter pylori (strain J99 / ATCC 700824) (Campylobacter pylori J99), this protein is tRNA (guanine-N(7)-)-methyltransferase.